The chain runs to 866 residues: Paramyosin (866 aa).

The nonhelical region stretch occupies residues 1-22; the sequence is MMNHDTESHVKISRTIYRGVSP. Residues 23-839 adopt a coiled-coil conformation; that stretch reads STTRLESRVR…AERTVTVRRV (817 aa). The nonhelical region stretch occupies residues 840-866; it reads GPGGRAVSVARELSVTSNRGMRATSMM.

This sequence belongs to the paramyosin family. Homodimer.

The protein resides in the cytoplasm. The protein localises to the myofibril. Its function is as follows. Paramyosin is a major structural component of many thick filaments isolated from invertebrate muscles. This Schistosoma japonicum (Blood fluke) protein is Paramyosin.